The sequence spans 321 residues: Mas-related G-protein coupled receptor member D (321 aa).

The Extracellular portion of the chain corresponds to 1–8 (MNSTLDSS). N-linked (GlcNAc...) asparagine glycosylation is present at N2. The chain crosses the membrane as a helical span at residues 9 to 29 (PAPGLTISPTMDLVTWIYFSV). Position 30 (T30) is a topological domain, cytoplasmic. The chain crosses the membrane as a helical span at residues 31–51 (FLAMATCVGGMAGNSLVIWLL). The Extracellular portion of the chain corresponds to 52–72 (SCNGMQRSPFCVYVLNLAVAD). A helical membrane pass occupies residues 73-93 (FLFLFCMASMLSLETGPLLIV). Residues 94–146 (NISAKIYEGMRRIKYFAYTAGLSLLTAISTQRCLSVLFPIWYKCHRPRHLSSV) lie on the Cytoplasmic side of the membrane. Residues 147-167 (VSGALWALAFLMNFLASFFCV) traverse the membrane as a helical segment. Residues 168–181 (QFWHPNKHQCFKVD) lie on the Extracellular side of the membrane. A helical transmembrane segment spans residues 182 to 202 (IVFNSLILGIFMPVMILTSTI). Residues 203-220 (LFIRVRKNSLMQRRRPRR) lie on the Cytoplasmic side of the membrane. A helical transmembrane segment spans residues 221-241 (LYVVILTSILVFLTCSLPLGI). Topologically, residues 242–260 (NWFLLYWVDVKRDVRLLYS) are extracellular. A helical membrane pass occupies residues 261-281 (CVSRFSSSLSSSANPVIYFLV). Over 282-321 (GSQKSHRLQESLGAVLGRALRDEPEPEGRETPSTCTNDGV) the chain is Cytoplasmic. Residues 302–311 (RDEPEPEGRE) show a composition bias toward basic and acidic residues. The segment at 302 to 321 (RDEPEPEGRETPSTCTNDGV) is disordered. Over residues 312-321 (TPSTCTNDGV) the composition is skewed to polar residues.

It belongs to the G-protein coupled receptor 1 family. Mas subfamily. As to expression, expressed in a subset of sensory neurons that includes nociceptors. Expressed in the subclass of non-peptidergic sensory neurons that are IB4(+) and VR1(-).

It localises to the cell membrane. Its function is as follows. May regulate nociceptor function and/or development, including the sensation or modulation of pain. Functions as a specific membrane receptor for beta-alanine. The receptor couples with G-protein G(q) and G(i). The protein is Mas-related G-protein coupled receptor member D (Mrgprd) of Mus musculus (Mouse).